The following is a 323-amino-acid chain: Aldo-keto reductase family 1 member C3 (323 aa).

NADP(+)-binding positions include 20–24 and D50; that span reads GFGTY. Y55 serves as the catalytic Proton donor. H117 is a substrate binding site. NADP(+) is bound by residues 166-167, Q190, 216-221, and 270-280; these read SN, YSALGS, and KSYNEQRIREN.

Belongs to the aldo/keto reductase family.

The protein resides in the cytoplasm. It carries out the reaction a 3alpha-hydroxysteroid + NADP(+) = a 3-oxosteroid + NADPH + H(+). The catalysed reaction is a 3alpha-hydroxysteroid + NAD(+) = a 3-oxosteroid + NADH + H(+). It catalyses the reaction prostaglandin F2alpha + NADP(+) = prostaglandin D2 + NADPH + H(+). The enzyme catalyses testosterone + NAD(+) = androst-4-ene-3,17-dione + NADH + H(+). It carries out the reaction testosterone + NADP(+) = androst-4-ene-3,17-dione + NADPH + H(+). The catalysed reaction is prostaglandin F2alpha + NADP(+) = prostaglandin H2 + NADPH + H(+). It catalyses the reaction prostaglandin D2 + NADPH + H(+) = 11beta-prostaglandin F2 + NADP(+). The enzyme catalyses prostaglandin D2-ethanolamide + NADPH + H(+) = 11beta-prostaglandin F2-ethanolamide + NADP(+). It carries out the reaction 17beta-estradiol + NADP(+) = estrone + NADPH + H(+). The catalysed reaction is 17beta-estradiol + NAD(+) = estrone + NADH + H(+). It catalyses the reaction (20S)-hydroxypregn-4-en-3-one + NADP(+) = progesterone + NADPH + H(+). The enzyme catalyses (20S)-hydroxypregn-4-en-3-one + NAD(+) = progesterone + NADH + H(+). It carries out the reaction 5alpha-androstane-3alpha,17beta-diol + NADP(+) = 17beta-hydroxy-5alpha-androstan-3-one + NADPH + H(+). The catalysed reaction is 5alpha-androstane-3alpha,17beta-diol + NAD(+) = 17beta-hydroxy-5alpha-androstan-3-one + NADH + H(+). It catalyses the reaction androsterone + NADPH + H(+) = 5alpha-androstane-3alpha,17beta-diol + NADP(+). The enzyme catalyses 5alpha-androstane-3alpha,17beta-diol + NAD(+) = androsterone + NADH + H(+). It carries out the reaction 5alpha-androstane-3beta,17beta-diol + NADP(+) = 17beta-hydroxy-5alpha-androstan-3-one + NADPH + H(+). The catalysed reaction is 9-cis-retinol + NADP(+) = 9-cis-retinal + NADPH + H(+). It functions in the pathway steroid metabolism. In terms of biological role, cytosolic aldo-keto reductase that catalyzes the NADH and NADPH-dependent reduction of ketosteroids to hydroxysteroids. Acts as a NAD(P)(H)-dependent 3-, 17- and 20-ketosteroid reductase on the steroid nucleus and side chain and regulates the metabolism of androgens, estrogens and progesterone. Displays the ability to catalyze both oxidation and reduction in vitro, but most probably acts as a reductase in vivo since the oxidase activity measured in vitro is inhibited by physiological concentration of NADPH. Acts preferentially as a 17-ketosteroid reductase and has the highest catalytic efficiency of the AKR1C enzyme for the reduction of delta4-androstenedione to form testosterone. Reduces prostaglandin (PG) D2 to 11beta-prostaglandin F2, progesterone to 20alpha-hydroxyprogesterone and estrone to 17beta-estradiol. Catalyzes the transformation of the potent androgen dihydrotestosterone (DHT) into the less active form, 5-alpha-androstan-3-alpha,17-beta-diol (3-alpha-diol). Also displays retinaldehyde reductase activity toward 9-cis-retinal. The polypeptide is Aldo-keto reductase family 1 member C3 (AKR1C3) (Pongo abelii (Sumatran orangutan)).